A 329-amino-acid polypeptide reads, in one-letter code: GTPase Obg (329 aa).

In terms of domain architecture, Obg spans 1–159; that stretch reads MQFIDQACIS…WLLHLELKLL (159 aa). In terms of domain architecture, OBG-type G spans 160–328; the sequence is AEVGIIGLPN…LLKNVWEKLE (169 aa). ATP is bound by residues 166-173, 191-195, 213-216, 280-283, and 309-311; these read GLPNAGKS, FTTLI, DIPG, NKKE, and SAA. Mg(2+)-binding residues include serine 173 and threonine 193.

Belongs to the TRAFAC class OBG-HflX-like GTPase superfamily. OBG GTPase family. Monomer. Mg(2+) serves as cofactor.

The protein localises to the cytoplasm. Its function is as follows. An essential GTPase which binds GTP, GDP and possibly (p)ppGpp with moderate affinity, with high nucleotide exchange rates and a fairly low GTP hydrolysis rate. Plays a role in control of the cell cycle, stress response, ribosome biogenesis and in those bacteria that undergo differentiation, in morphogenesis control. This Prochlorococcus marinus (strain MIT 9211) protein is GTPase Obg.